A 952-amino-acid chain; its full sequence is Aminopeptidase 2, mitochondrial (952 aa).

A mitochondrion-targeting transit peptide spans 1–52 (MPIVRWLLLKSAVRGSSLIGKAHPCLRSIAAHPRYLSNVYSPPAGVSRSLRI). Substrate-binding positions include glutamate 228 and 360-364 (GAMEN). Asparagine 381 carries N-linked (GlcNAc...) asparagine glycosylation. Histidine 396 serves as a coordination point for Zn(2+). The active-site Proton acceptor is the glutamate 397. Zn(2+) contacts are provided by histidine 400 and glutamate 419. Asparagine 713 carries an N-linked (GlcNAc...) asparagine glycan.

The protein belongs to the peptidase M1 family. Zn(2+) serves as cofactor.

The protein resides in the periplasm. It localises to the cytoplasm. The protein localises to the mitochondrion. In terms of biological role, involved in the cellular supply of leucine from externally offered leucine-containing dipeptide substrates. This chain is Aminopeptidase 2, mitochondrial (APE2), found in Saccharomyces cerevisiae (strain ATCC 204508 / S288c) (Baker's yeast).